A 635-amino-acid polypeptide reads, in one-letter code: DNA mismatch repair protein MutL (635 aa).

Residues 352–380 (KAALQRGWVPPGAGRPGEGGGRAAPPPWR) form a disordered region.

The protein belongs to the DNA mismatch repair MutL/HexB family.

In terms of biological role, this protein is involved in the repair of mismatches in DNA. It is required for dam-dependent methyl-directed DNA mismatch repair. May act as a 'molecular matchmaker', a protein that promotes the formation of a stable complex between two or more DNA-binding proteins in an ATP-dependent manner without itself being part of a final effector complex. The chain is DNA mismatch repair protein MutL from Symbiobacterium thermophilum (strain DSM 24528 / JCM 14929 / IAM 14863 / T).